Reading from the N-terminus, the 368-residue chain is Alanine racemase (368 aa).

Residue K40 is the Proton acceptor; specific for D-alanine of the active site. The residue at position 40 (K40) is an N6-(pyridoxal phosphate)lysine. Residue R134 participates in substrate binding. Y263 functions as the Proton acceptor; specific for L-alanine in the catalytic mechanism. M310 lines the substrate pocket.

Belongs to the alanine racemase family. Requires pyridoxal 5'-phosphate as cofactor.

The catalysed reaction is L-alanine = D-alanine. The protein operates within amino-acid biosynthesis; D-alanine biosynthesis; D-alanine from L-alanine: step 1/1. In terms of biological role, catalyzes the interconversion of L-alanine and D-alanine. May also act on other amino acids. This chain is Alanine racemase (alr), found in Listeria innocua serovar 6a (strain ATCC BAA-680 / CLIP 11262).